The sequence spans 139 residues: Holo-[acyl-carrier-protein] synthase (139 aa).

Mg(2+)-binding residues include Asp8 and Glu61.

Belongs to the P-Pant transferase superfamily. AcpS family. Mg(2+) is required as a cofactor.

Its subcellular location is the cytoplasm. The enzyme catalyses apo-[ACP] + CoA = holo-[ACP] + adenosine 3',5'-bisphosphate + H(+). Functionally, transfers the 4'-phosphopantetheine moiety from coenzyme A to a Ser of acyl-carrier-protein. In Bradyrhizobium diazoefficiens (strain JCM 10833 / BCRC 13528 / IAM 13628 / NBRC 14792 / USDA 110), this protein is Holo-[acyl-carrier-protein] synthase.